The primary structure comprises 254 residues: Large ribosomal subunit protein uL4 (254 aa).

The disordered stretch occupies residues 45-70; that stretch reads PWGNDPEAGKRTSAKGWGSGRGTARV.

This sequence belongs to the universal ribosomal protein uL4 family. Part of the 50S ribosomal subunit.

In terms of biological role, one of the primary rRNA binding proteins, this protein initially binds near the 5'-end of the 23S rRNA. It is important during the early stages of 50S assembly. It makes multiple contacts with different domains of the 23S rRNA in the assembled 50S subunit and ribosome. Forms part of the polypeptide exit tunnel. This chain is Large ribosomal subunit protein uL4, found in Methanobrevibacter smithii (strain ATCC 35061 / DSM 861 / OCM 144 / PS).